Consider the following 67-residue polypeptide: Small ribosomal subunit protein eS17 (67 aa).

Belongs to the eukaryotic ribosomal protein eS17 family.

In Korarchaeum cryptofilum (strain OPF8), this protein is Small ribosomal subunit protein eS17.